We begin with the raw amino-acid sequence, 69 residues long: Conotoxin AbVIF (69 aa).

Positions 1–17 are cleaved as a signal peptide; the sequence is VLIIAVLFLTACQLTTA. Positions 18 to 40 are excised as a propeptide; the sequence is ETSSRGKQKHRALRSTDKNSRMS. The interval 20-41 is disordered; that stretch reads SSRGKQKHRALRSTDKNSRMSK. Cystine bridges form between cysteine 43–cysteine 57, cysteine 50–cysteine 61, and cysteine 56–cysteine 68.

The protein belongs to the conotoxin O1 superfamily. Expressed by the venom duct.

It localises to the secreted. This is Conotoxin AbVIF from Conus abbreviatus (Abbreviated cone).